The following is a 323-amino-acid chain: Porphobilinogen deaminase (323 aa).

S-(dipyrrolylmethanemethyl)cysteine is present on C251.

It belongs to the HMBS family. Monomer. It depends on dipyrromethane as a cofactor.

It carries out the reaction 4 porphobilinogen + H2O = hydroxymethylbilane + 4 NH4(+). Its pathway is porphyrin-containing compound metabolism; protoporphyrin-IX biosynthesis; coproporphyrinogen-III from 5-aminolevulinate: step 2/4. The protein operates within porphyrin-containing compound metabolism; chlorophyll biosynthesis. Tetrapolymerization of the monopyrrole PBG into the hydroxymethylbilane pre-uroporphyrinogen in several discrete steps. The polypeptide is Porphobilinogen deaminase (hemC) (Nostoc sp. (strain PCC 7120 / SAG 25.82 / UTEX 2576)).